We begin with the raw amino-acid sequence, 426 residues long: MEATAASTSLPDPGDFDRNVPRICGVCGDRATGFHFNAMTCEGCKGFFRRSMKRKALFTCPFNGDCRITKDNRRHCQACRLKRCIDIGMMKEFILTDEEVQRKREMILKRKEEEALKDSLRPKLSEEQQRIITTLLEAHHKTYDDTYSDFSQFRPPVRNSEDEGNRPLRSILTPSFSGNSSSSCSDHCTSSPDTMEPTSFSNQDLNEEDSDDPSVTLDLSQLSMLPHLADLVSYSIQKVIGFAKMIPGFRDLTPEDQIVLLKSSAIEVIMLRSNQSFTLDDDMSWTCGSPDYKYQVSDVTRAGHSLELIEPLIKFQVGLKKLNLHEEEHVLLMAICIVSPDRPGVQDAALVEAIQDRLSNTLQTYIRCRHPPPGSHLLYAKMIQKLADLRSLNEEHSKQYRCLSFQPESSMKLTPLLFEVFGNEIS.

Positions 21-96 (PRICGVCGDR…IGMMKEFILT (76 aa)) form a DNA-binding region, nuclear receptor. Residues cysteine 24, cysteine 27, cysteine 41, cysteine 44, cysteine 60, cysteine 66, cysteine 76, and cysteine 79 each contribute to the Zn(2+) site. 2 consecutive NR C4-type zinc fingers follow at residues 24–44 (CGVC…CEGC) and 60–84 (CPFN…LKRC). The hinge stretch occupies residues 97 to 126 (DEEVQRKREMILKRKEEEALKDSLRPKLSE). Residues 127–422 (EQQRIITTLL…LTPLLFEVFG (296 aa)) form the NR LBD domain. Tyrosine 143 is a binding site for calcitriol. The tract at residues 147–215 (YSDFSQFRPP…NEEDSDDPSV (69 aa)) is disordered. A compositionally biased stretch (low complexity) spans 175 to 191 (SFSGNSSSSCSDHCTSS). Residues 192-204 (PDTMEPTSFSNQD) are compositionally biased toward polar residues. Serine 235 contacts calcitriol. Residues 244–262 (KMIPGFRDLTPEDQIVLLK) form an interaction with coactivator LXXLL motif region. Positions 272, 276, 304, and 396 each coordinate calcitriol. The short motif at 415 to 423 (PLLFEVFGN) is the 9aaTAD element.

It belongs to the nuclear hormone receptor family. NR1 subfamily. Homodimer in the absence of bound vitamin D3. Heterodimer with RXRA after vitamin D3 binding. Interacts with MED1, NCOA1, NCOA2, NCOA3 and NCOA6 coactivators, leading to a strong increase of transcription of target genes. Interacts with the corepressor NCOR1. Interacts with SNW1. Interacts with IRX4, the interaction does not affect its transactivation activity. Interacts with CRY1. Interacts with CRY2 in a ligand-dependent manner. Post-translationally, ubiquitinated by UBR5, leading to its degradation: UBR5 specifically recognizes and binds ligand-bound VDR when it is not associated with coactivators (NCOAs). In presence of NCOAs, the UBR5-degron is not accessible, preventing its ubiquitination and degradation. Mammary gland, expression increases during lactation. Also found in colon, expression is down-regulated at parturition.

Its subcellular location is the nucleus. The protein localises to the cytoplasm. Its function is as follows. Nuclear receptor for calcitriol, the active form of vitamin D3 which mediates the action of this vitamin on cells. Enters the nucleus upon vitamin D3 binding where it forms heterodimers with the retinoid X receptor/RXR. The VDR-RXR heterodimers bind to specific response elements on DNA and activate the transcription of vitamin D3-responsive target genes. Plays a central role in calcium homeostasis. Also functions as a receptor for the secondary bile acid lithocholic acid (LCA) and its metabolites. The chain is Vitamin D3 receptor (VDR) from Bos taurus (Bovine).